Consider the following 553-residue polypeptide: Dihydroxy-acid dehydratase (553 aa).

Aspartate 78 contacts Mg(2+). [2Fe-2S] cluster is bound at residue cysteine 119. Mg(2+) is bound by residues aspartate 120 and lysine 121. Lysine 121 carries the post-translational modification N6-carboxylysine. Cysteine 191 is a [2Fe-2S] cluster binding site. Glutamate 442 serves as a coordination point for Mg(2+). The active-site Proton acceptor is serine 468.

Belongs to the IlvD/Edd family. In terms of assembly, homodimer. Requires [2Fe-2S] cluster as cofactor. Mg(2+) serves as cofactor.

The catalysed reaction is (2R)-2,3-dihydroxy-3-methylbutanoate = 3-methyl-2-oxobutanoate + H2O. The enzyme catalyses (2R,3R)-2,3-dihydroxy-3-methylpentanoate = (S)-3-methyl-2-oxopentanoate + H2O. It participates in amino-acid biosynthesis; L-isoleucine biosynthesis; L-isoleucine from 2-oxobutanoate: step 3/4. Its pathway is amino-acid biosynthesis; L-valine biosynthesis; L-valine from pyruvate: step 3/4. Functionally, functions in the biosynthesis of branched-chain amino acids. Catalyzes the dehydration of (2R,3R)-2,3-dihydroxy-3-methylpentanoate (2,3-dihydroxy-3-methylvalerate) into 2-oxo-3-methylpentanoate (2-oxo-3-methylvalerate) and of (2R)-2,3-dihydroxy-3-methylbutanoate (2,3-dihydroxyisovalerate) into 2-oxo-3-methylbutanoate (2-oxoisovalerate), the penultimate precursor to L-isoleucine and L-valine, respectively. This chain is Dihydroxy-acid dehydratase, found in Carboxydothermus hydrogenoformans (strain ATCC BAA-161 / DSM 6008 / Z-2901).